The sequence spans 492 residues: Tumor necrosis factor receptor superfamily member 8 (492 aa).

A signal peptide spans 1–18; the sequence is MSILLKAAGLLFLGMLQA. Residues 19–282 are Extracellular-facing; it reads FPKDRPLDTT…STGTPFLDPG (264 aa). TNFR-Cys repeat units follow at residues 57–104 and 105–141; these read PCPQ…PRIC and ECQP…NTIC. Intrachain disulfides connect C58–C80, C83–C96, C86–C104, and C123–C141. Residues 141–178 form a disordered region; sequence CDLPSPGSGPNGSNPDDCKTLTSHTTPQAIPTLESPAN. The segment covering 144–155 has biased composition (low complexity); it reads PSPGSGPNGSNP. N151, N178, and N224 each carry an N-linked (GlcNAc...) asparagine glycan. Residues 160-178 show a composition bias toward polar residues; that stretch reads TLTSHTTPQAIPTLESPAN. The helical transmembrane segment at 283-303 threads the bilayer; sequence SMLFWVAMVVLLVGSASFLLC. Over 304–492 the chain is Cytoplasmic; sequence YWKACRRRFQ…DHEPTTVSEK (189 aa). Phosphoserine occurs at positions 334 and 348. 2 disordered regions span residues 336-366 and 432-492; these read PTEK…PPAV and PEGR…VSEK. Over residues 339 to 360 the composition is skewed to polar residues; the sequence is KLTQLQRSGSVTDSSAGHTLSP. Basic and acidic residues-rich tracts occupy residues 450-459 and 478-492; these read EVDHTPHYPE and EGGK…VSEK.

The protein belongs to the TNFR8 family. Interacts with TRAF1, TRAF2, TRAF3 and TRAF5. In terms of tissue distribution, very low level of expression. Detected in spleen, thymus and lung. Highly expressed in HTLV-1 infected T-cell lines.

It is found in the cell membrane. Functionally, receptor for TNFSF8/CD30L. May play a role in the regulation of cellular growth and transformation of activated lymphoblasts. Regulates gene expression through activation of NF-kappa-B. The protein is Tumor necrosis factor receptor superfamily member 8 of Rattus norvegicus (Rat).